A 146-amino-acid chain; its full sequence is Hemoglobin subunit beta-1 (146 aa).

One can recognise a Globin domain in the interval 2–146 (EWTDAEKSTI…VVAAMGSRYF (145 aa)). Heme b contacts are provided by His63 and His92.

This sequence belongs to the globin family. As to quaternary structure, heterotetramer of two alpha chains and two beta chains. In terms of tissue distribution, red blood cells.

Functionally, involved in oxygen transport from gills to the various peripheral tissues. This is Hemoglobin subunit beta-1 (hbb1) from Oncorhynchus mykiss (Rainbow trout).